The following is a 178-amino-acid chain: ATP synthase subunit delta (178 aa).

It belongs to the ATPase delta chain family. As to quaternary structure, F-type ATPases have 2 components, F(1) - the catalytic core - and F(0) - the membrane proton channel. F(1) has five subunits: alpha(3), beta(3), gamma(1), delta(1), epsilon(1). F(0) has three main subunits: a(1), b(2) and c(10-14). The alpha and beta chains form an alternating ring which encloses part of the gamma chain. F(1) is attached to F(0) by a central stalk formed by the gamma and epsilon chains, while a peripheral stalk is formed by the delta and b chains.

The protein localises to the cell membrane. Functionally, f(1)F(0) ATP synthase produces ATP from ADP in the presence of a proton or sodium gradient. F-type ATPases consist of two structural domains, F(1) containing the extramembraneous catalytic core and F(0) containing the membrane proton channel, linked together by a central stalk and a peripheral stalk. During catalysis, ATP synthesis in the catalytic domain of F(1) is coupled via a rotary mechanism of the central stalk subunits to proton translocation. Its function is as follows. This protein is part of the stalk that links CF(0) to CF(1). It either transmits conformational changes from CF(0) to CF(1) or is implicated in proton conduction. This is ATP synthase subunit delta from Streptococcus pneumoniae (strain CGSP14).